We begin with the raw amino-acid sequence, 95 residues long: Glutamine synthetase and cystathionine beta-lyase binding protein (95 aa).

As to quaternary structure, interacts with glutamine synthetase (TTHA1329) and cystathionine beta-lyase (TTHA1620), but proteins do not form a ternary complex.

Binds to glutamine synthetase and cystathionine beta-lyase. May be utilized for the efficient use of nitrogen in the global nitrogen regulation of T.thermophilus. The chain is Glutamine synthetase and cystathionine beta-lyase binding protein from Thermus thermophilus (strain ATCC 27634 / DSM 579 / HB8).